We begin with the raw amino-acid sequence, 114 residues long: Protein D2 (114 aa).

Belongs to the phosphatidylethanolamine-binding protein family.

This is Protein D2 (D2) from Onchocerca volvulus.